The following is a 471-amino-acid chain: Probable anion transporter 5, chloroplastic (471 aa).

A chloroplast-targeting transit peptide spans Met-1 to Arg-59. The interval Pro-56–Gly-76 is disordered. Transmembrane regions (helical) follow at residues Pro-62–Leu-82, Ile-103–Pro-123, Val-162–Ile-182, and Leu-185–Phe-205. Over residues Gly-63–Gly-76 the composition is skewed to gly residues. Positions Gly-226–Ser-247 are disordered. Low complexity predominate over residues Ser-228–Ser-247. 6 consecutive transmembrane segments (helical) span residues Val-270–Trp-290, Ala-307–Phe-327, Ile-348–Pro-368, Ile-371–Cys-391, Ile-403–Thr-423, and Ile-435–Phe-455.

Belongs to the major facilitator superfamily. Sodium/anion cotransporter (TC 2.A.1.14) family.

The protein resides in the plastid. It is found in the chloroplast membrane. In terms of biological role, probable anion transporter. This Oryza sativa subsp. japonica (Rice) protein is Probable anion transporter 5, chloroplastic (PHT4;5).